A 556-amino-acid polypeptide reads, in one-letter code: Potassium-transporting ATPase potassium-binding subunit (556 aa).

The next 10 helical transmembrane spans lie at 6–26 (AGIA…VPLG), 65–85 (SVLA…LVQG), 133–153 (GLAV…IALV), 176–196 (LRIL…GGAI), 249–269 (PTPW…FSLP), 283–303 (VAIA…TMLL), 378–398 (GLYG…LMVG), 415–435 (LAAS…AIAM), 483–503 (ALGL…LALA), and 526–546 (FVGM…LPIL).

Belongs to the KdpA family. As to quaternary structure, the system is composed of three essential subunits: KdpA, KdpB and KdpC.

The protein localises to the cell membrane. Part of the high-affinity ATP-driven potassium transport (or Kdp) system, which catalyzes the hydrolysis of ATP coupled with the electrogenic transport of potassium into the cytoplasm. This subunit binds the extracellular potassium ions and delivers the ions to the membrane domain of KdpB through an intramembrane tunnel. This Mycolicibacterium smegmatis (strain ATCC 700084 / mc(2)155) (Mycobacterium smegmatis) protein is Potassium-transporting ATPase potassium-binding subunit.